A 142-amino-acid polypeptide reads, in one-letter code: Large ribosomal subunit protein uL13 (142 aa).

Belongs to the universal ribosomal protein uL13 family. As to quaternary structure, part of the 50S ribosomal subunit.

Functionally, this protein is one of the early assembly proteins of the 50S ribosomal subunit, although it is not seen to bind rRNA by itself. It is important during the early stages of 50S assembly. In Pectobacterium carotovorum subsp. carotovorum (strain PC1), this protein is Large ribosomal subunit protein uL13.